Reading from the N-terminus, the 363-residue chain is DNA replication and repair protein RecF (363 aa).

Residue 30-37 participates in ATP binding; the sequence is GDNAQGKT.

This sequence belongs to the RecF family.

The protein resides in the cytoplasm. Its function is as follows. The RecF protein is involved in DNA metabolism; it is required for DNA replication and normal SOS inducibility. RecF binds preferentially to single-stranded, linear DNA. It also seems to bind ATP. This Syntrophotalea carbinolica (strain DSM 2380 / NBRC 103641 / GraBd1) (Pelobacter carbinolicus) protein is DNA replication and repair protein RecF.